Consider the following 479-residue polypeptide: ATP-dependent RNA helicase DDX19B (479 aa).

Ala2 is modified (N-acetylalanine). The tract at residues 2-300 (ATDSWALAVD…DPNVIKLKRE (299 aa)) is N-terminal lobe. Positions 34 to 54 (TNGAVVKTNANAEKTDEEEKE) are disordered. The N-terminal helix stretch occupies residues 55–68 (DRAAQSLLNKLIRS). Residues 92–120 (KSFEELRLKPQLLQGVYAMGFNRPSKIQE) carry the Q motif motif. ATP is bound by residues Gln119 and 138–145 (SQSGTGKT). One can recognise a Helicase ATP-binding domain in the interval 125-295 (LMLAEPPQNL…QKVVPDPNVI (171 aa)). The DEAD box motif lies at 242 to 245 (DEAD). Residues 301–479 (EETLDTIKQY…DLDEIEKIAN (179 aa)) form a C-terminal lobe region. In terms of domain architecture, Helicase C-terminal spans 306–474 (TIKQYYVLCS…RLDTDDLDEI (169 aa)). Residues Arg429 and Arg432 each coordinate ATP.

The protein belongs to the DEAD box helicase family. DDX19/DBP5 subfamily. As to quaternary structure, associates with the nuclear pore complex via interaction with NUP214. Interacts with NUP214 or RNA in a mutually exclusive manner.

Its subcellular location is the cytoplasm. It is found in the nucleus. It localises to the nucleoplasm. The catalysed reaction is ATP + H2O = ADP + phosphate + H(+). Its function is as follows. ATP-dependent RNA helicase involved in mRNA export from the nucleus. Rather than unwinding RNA duplexes, DDX19B functions as a remodeler of ribonucleoprotein particles, whereby proteins bound to nuclear mRNA are dissociated and replaced by cytoplasmic mRNA binding proteins. The sequence is that of ATP-dependent RNA helicase DDX19B (DDX19B) from Homo sapiens (Human).